A 181-amino-acid chain; its full sequence is Mitochondrial inner membrane protein Mpv17 (181 aa).

Transmembrane regions (helical) follow at residues 20–37, 51–67, 86–103, and 152–169; these read MCIA…AQYL, FSFL…FIWF, LCID…AILF, and VILN…LSYI.

The protein belongs to the peroxisomal membrane protein PXMP2/4 family.

The protein resides in the mitochondrion inner membrane. In terms of biological role, involved in mitochondria homeostasis. This is Mitochondrial inner membrane protein Mpv17 from Caenorhabditis elegans.